The primary structure comprises 58 residues: MLYWAIVCLVIAVIAGILGFGGIAGTAAGFAKILFFVFLVLLVVSLVVNALRGKGPKV.

Transmembrane regions (helical) follow at residues 4–24 (WAIV…GGIA) and 28–48 (AGFA…SLVV).

It belongs to the UPF0391 family.

Its subcellular location is the cell membrane. The protein is UPF0391 membrane protein Maqu_2901 of Marinobacter nauticus (strain ATCC 700491 / DSM 11845 / VT8) (Marinobacter aquaeolei).